We begin with the raw amino-acid sequence, 413 residues long: Serine/threonine transporter SstT (413 aa).

A run of 8 helical transmembrane segments spans residues Ile19–Val39, Ala61–Gly81, Ile89–Phe109, Ala148–Leu168, Ile189–Leu209, Leu223–Val243, Ile297–Leu317, and Ile325–Gly345.

Belongs to the dicarboxylate/amino acid:cation symporter (DAACS) (TC 2.A.23) family.

The protein localises to the cell inner membrane. The catalysed reaction is L-serine(in) + Na(+)(in) = L-serine(out) + Na(+)(out). The enzyme catalyses L-threonine(in) + Na(+)(in) = L-threonine(out) + Na(+)(out). In terms of biological role, involved in the import of serine and threonine into the cell, with the concomitant import of sodium (symport system). This chain is Serine/threonine transporter SstT, found in Pasteurella multocida (strain Pm70).